The sequence spans 542 residues: Chaperonin GroEL (542 aa).

ATP contacts are provided by residues 29-32 (TIGP), 86-90 (DGTTT), Gly413, 477-479 (NAA), and Asp493.

It belongs to the chaperonin (HSP60) family. In terms of assembly, forms a cylinder of 14 subunits composed of two heptameric rings stacked back-to-back. Interacts with the co-chaperonin GroES.

The protein localises to the cytoplasm. The catalysed reaction is ATP + H2O + a folded polypeptide = ADP + phosphate + an unfolded polypeptide.. Together with its co-chaperonin GroES, plays an essential role in assisting protein folding. The GroEL-GroES system forms a nano-cage that allows encapsulation of the non-native substrate proteins and provides a physical environment optimized to promote and accelerate protein folding. The polypeptide is Chaperonin GroEL (Lactobacillus acidophilus (strain ATCC 700396 / NCK56 / N2 / NCFM)).